A 951-amino-acid chain; its full sequence is Protein inturned (951 aa).

3 disordered regions span residues 1–32, 189–208, and 687–765; these read MEHS…FSSS, SSRN…NQRL, and TPKR…GGSG. The PDZ domain maps to 187-269; sequence HQSSRNSKRS…PMQLKLTFET (83 aa). Low complexity predominate over residues 715–726; that stretch reads PTRSSGGSDSGT. Basic and acidic residues predominate over residues 743–752; that stretch reads MARKFGRRES. Residues 754 to 765 show a composition bias toward gly residues; the sequence is GSGGSDGSGGSG.

Belongs to the inturned family. Interacts with fuz and wdpcp; fuz, intu and wdpcp probably form the core CPLANE (ciliogenesis and planar polarity effectors) complex. Expressed in the neural plate during neural tube closure with subsequent strong expression in the ventral neural tube and in facial mesenchyme.

The protein localises to the cell surface. It is found in the cell membrane. Its subcellular location is the cytoplasm. It localises to the cytoskeleton. The protein resides in the cilium basal body. Plays a role in the definition of cell polarity via the planar cell polarity (PCP) cascade. Required for ciliogenesis by controlling the organization of the apical actin cytoskeleton and the positioning of the basal bodies at the apical cell surface, which in turn is essential for the normal orientation of elongating ciliary microtubules. Proposed to function as core component of a functional module called CPLANE (ciliogenesis and planar polarity effectors) involved in recruitment of peripheral IFT-A proteins to basal bodies. Controls the localization of both rhoa and disheveled in multi-ciliated cells. Has an indirect effect on hedgehog signaling. This chain is Protein inturned, found in Xenopus laevis (African clawed frog).